A 769-amino-acid chain; its full sequence is Serine protease HtrA-like (769 aa).

Basic residues predominate over residues 1–20 (MDIGKKHVIPKSQYRRKRRE). The segment at 1 to 390 (MDIGKKHVIP…ATSKLNKGRA (390 aa)) is disordered. Composition is skewed to basic and acidic residues over residues 21–64 (FFHN…ERFK) and 71–108 (LEQR…DVSK). A compositionally biased stretch (polar residues) spans 126–137 (YEQNSEATLSTK). The span at 138–186 (STDKVESTEMRKLSSDKNKVGHEEQHVLSKPSEHDKETRIDSESSRTDS) shows a compositional bias: basic and acidic residues. The segment covering 247–262 (QQSQNEQTKTYTYGDS) has biased composition (polar residues). Basic and acidic residues-rich tracts occupy residues 264–296 (QNDK…HIVD) and 310–330 (KTDD…HKQN). Residues 331 to 347 (ADSSETVGYQSQSTASH) show a composition bias toward polar residues. Basic and acidic residues predominate over residues 348–364 (RSTEKRNISINDHDKLN). The span at 365–390 (GQKTNTKTSANNNQKKATSKLNKGRA) shows a compositional bias: polar residues. A helical membrane pass occupies residues 410–430 (LVILMGIIILIVILNAIFNNV). Catalysis depends on charge relay system residues His504, Asp534, and Ser619. The 54-residue stretch at 680 to 733 (IASLNSFERQAVKLPGKVKNGVVVDQVDNNGLADQSGLKKGDVITELDGKLLED) folds into the PDZ domain.

It belongs to the peptidase S1C family.

The protein resides in the cell membrane. The protein is Serine protease HtrA-like of Staphylococcus aureus (strain USA300).